Here is a 542-residue protein sequence, read N- to C-terminus: MTRYIFVTGGVVSSLGKGIASASLAAILEARGLKITMLKLDPYINVDPGTMSPFQHGEVFVTQDGAETDLDLGHYERFVRTTMTQNNNFTTGRVYMDVLRKERRGDYLGATVQVIPHITDEIKRRIIKGAGDADVALVEIGGTVGDIESQPFLEAIRQLRVEIGAKRAMLMHLTLVPYIATAGETKTKPTQHSVKELRSIGLQPDVLVCRSDHPIDVSSRRKIALFTNVEERAVIALEDVDTIYRIPSVLHAQGLDDIVVERFGLECGQADLSEWDRVVDAKLNPEREVTIAMVGKYMELLDAYKSLIEAMTHAGIQSRTKVNLRYIDSEDIEQQGTSLLEGVDAILVPGGFGLRGVEGKISTVQYARENKIPYLGICLGMQVAVIEYARNVLGWSDANSTEFDKSSGHPVVGLITEWQDATGATEIRTEASDLGGTMRLGAQECQLQTGTLVHDCYAKDVIVERHRHRYEVNNNLLPQLEQAGLKISGRSGDGALVEVVEAPEHPWFVACQFHPEFTSTPRDGHPLFSGFVNAALKYSGKA.

Positions M1–L265 are amidoligase domain. S13 serves as a coordination point for CTP. S13 lines the UTP pocket. ATP is bound by residues S14 to I19 and D71. 2 residues coordinate Mg(2+): D71 and E139. CTP-binding positions include D146–E148, K186–Q191, and K222. UTP contacts are provided by residues K186–Q191 and K222. A Glutamine amidotransferase type-1 domain is found at T290 to K541. G351 lines the L-glutamine pocket. C378 functions as the Nucleophile; for glutamine hydrolysis in the catalytic mechanism. Residues L379 to Q382, E402, and R469 each bind L-glutamine. Active-site residues include H514 and E516.

It belongs to the CTP synthase family. As to quaternary structure, homotetramer.

The enzyme catalyses UTP + L-glutamine + ATP + H2O = CTP + L-glutamate + ADP + phosphate + 2 H(+). The catalysed reaction is L-glutamine + H2O = L-glutamate + NH4(+). It carries out the reaction UTP + NH4(+) + ATP = CTP + ADP + phosphate + 2 H(+). Its pathway is pyrimidine metabolism; CTP biosynthesis via de novo pathway; CTP from UDP: step 2/2. Allosterically activated by GTP, when glutamine is the substrate; GTP has no effect on the reaction when ammonia is the substrate. The allosteric effector GTP functions by stabilizing the protein conformation that binds the tetrahedral intermediate(s) formed during glutamine hydrolysis. Inhibited by the product CTP, via allosteric rather than competitive inhibition. Functionally, catalyzes the ATP-dependent amination of UTP to CTP with either L-glutamine or ammonia as the source of nitrogen. Regulates intracellular CTP levels through interactions with the four ribonucleotide triphosphates. This Pseudomonas aeruginosa (strain LESB58) protein is CTP synthase.